Here is a 464-residue protein sequence, read N- to C-terminus: Glutamate--tRNA ligase 1 (464 aa).

Positions 8–18 (PSPTGHLHVGG) match the 'HIGH' region motif. A 'KMSKS' region motif is present at residues 231-235 (PLSKR). ATP is bound at residue Lys-234.

The protein belongs to the class-I aminoacyl-tRNA synthetase family. Glutamate--tRNA ligase type 1 subfamily. Monomer.

Its subcellular location is the cytoplasm. It carries out the reaction tRNA(Glu) + L-glutamate + ATP = L-glutamyl-tRNA(Glu) + AMP + diphosphate. In terms of biological role, catalyzes the attachment of glutamate to tRNA(Glu) in a two-step reaction: glutamate is first activated by ATP to form Glu-AMP and then transferred to the acceptor end of tRNA(Glu). The protein is Glutamate--tRNA ligase 1 of Thermotoga sp. (strain RQ2).